Consider the following 249-residue polypeptide: Transmembrane protein 51 (249 aa).

A run of 2 helical transmembrane segments spans residues 17-37 (IGLG…VPGF) and 64-84 (VAYV…CLSI). Disordered regions lie at residues 95–126 (ELAR…SRYY), 161–199 (TGLD…PLKV), and 213–249 (RITL…RPPD). Residues 99-108 (IQQQAGTVPH) show a composition bias toward polar residues. 4 positions are modified to phosphoserine: Ser109, Ser114, Ser178, and Ser188. Positions 167–178 (TPTSTRAETETS) are enriched in polar residues. The span at 190 to 199 (LAKRLKPLKV) shows a compositional bias: basic residues. Residues 220–234 (NVPPPSIEPLTPPPL) are compositionally biased toward pro residues.

The protein localises to the membrane. In Mus musculus (Mouse), this protein is Transmembrane protein 51 (Tmem51).